The sequence spans 349 residues: Methylthioribose-1-phosphate isomerase (349 aa).

Substrate-binding positions include 49 to 51 (RGA), R92, and Q199. D240 acts as the Proton donor in catalysis. 250-251 (NK) provides a ligand contact to substrate.

The protein belongs to the eIF-2B alpha/beta/delta subunits family. MtnA subfamily.

The enzyme catalyses 5-(methylsulfanyl)-alpha-D-ribose 1-phosphate = 5-(methylsulfanyl)-D-ribulose 1-phosphate. It functions in the pathway amino-acid biosynthesis; L-methionine biosynthesis via salvage pathway; L-methionine from S-methyl-5-thio-alpha-D-ribose 1-phosphate: step 1/6. Catalyzes the interconversion of methylthioribose-1-phosphate (MTR-1-P) into methylthioribulose-1-phosphate (MTRu-1-P). The polypeptide is Methylthioribose-1-phosphate isomerase (Syntrophobacter fumaroxidans (strain DSM 10017 / MPOB)).